The sequence spans 272 residues: Dermonecrotic toxin SpeSicTox-betaIB2b (272 aa).

His-5 is a catalytic residue. Mg(2+) contacts are provided by Glu-25 and Asp-27. The active-site Nucleophile is His-41. 2 disulfide bridges follow: Cys-45-Cys-51 and Cys-47-Cys-191. Mg(2+) is bound at residue Asp-85.

It belongs to the arthropod phospholipase D family. Class II subfamily. Mg(2+) serves as cofactor. As to expression, expressed by the venom gland.

It localises to the secreted. It carries out the reaction an N-(acyl)-sphingosylphosphocholine = an N-(acyl)-sphingosyl-1,3-cyclic phosphate + choline. The enzyme catalyses an N-(acyl)-sphingosylphosphoethanolamine = an N-(acyl)-sphingosyl-1,3-cyclic phosphate + ethanolamine. It catalyses the reaction a 1-acyl-sn-glycero-3-phosphocholine = a 1-acyl-sn-glycero-2,3-cyclic phosphate + choline. The catalysed reaction is a 1-acyl-sn-glycero-3-phosphoethanolamine = a 1-acyl-sn-glycero-2,3-cyclic phosphate + ethanolamine. In terms of biological role, dermonecrotic toxins cleave the phosphodiester linkage between the phosphate and headgroup of certain phospholipids (sphingolipid and lysolipid substrates), forming an alcohol (often choline) and a cyclic phosphate. This toxin acts on sphingomyelin (SM). It may also act on ceramide phosphoethanolamine (CPE), lysophosphatidylcholine (LPC) and lysophosphatidylethanolamine (LPE), but not on lysophosphatidylserine (LPS), and lysophosphatidylglycerol (LPG). It acts by transphosphatidylation, releasing exclusively cyclic phosphate products as second products. Induces dermonecrosis, hemolysis, increased vascular permeability, edema, inflammatory response, and platelet aggregation. In Sicarius peruensis (Six-eyed sand spider), this protein is Dermonecrotic toxin SpeSicTox-betaIB2b.